A 360-amino-acid chain; its full sequence is Protein Wnt-2 (360 aa).

The N-terminal stretch at 1–25 (MNAPLGGIWPWLPLLLTWLTPEVSS) is a signal peptide. Cystine bridges form between C76/C87, C127/C135, C137/C157, C206/C220, C208/C215, C278/C309, C294/C304, C308/C348, C324/C339, C326/C336, and C331/C332. S212 carries O-palmitoleoyl serine; by PORCN lipidation. N-linked (GlcNAc...) asparagine glycosylation is present at N295.

Belongs to the Wnt family. Palmitoleoylation is required for efficient binding to frizzled receptors. Depalmitoleoylation leads to Wnt signaling pathway inhibition.

The protein resides in the secreted. Its subcellular location is the extracellular space. It localises to the extracellular matrix. Ligand for members of the frizzled family of seven transmembrane receptors. Functions in the canonical Wnt signaling pathway that results in activation of transcription factors of the TCF/LEF family. Functions as a upstream regulator of FGF10 expression. Plays an important role in embryonic lung development. May contribute to embryonic brain development by regulating the proliferation of dopaminergic precursors and neurons. The polypeptide is Protein Wnt-2 (WNT2) (Felis catus (Cat)).